The primary structure comprises 399 residues: Semaphorin-like protein 139 (399 aa).

The N-terminal stretch at 1–14 (MIPLLFILFYFTNC) is a signal peptide. The region spanning 15-399 (IEWHKFETSE…IPRMKKILKM (385 aa)) is the Sema domain.

Belongs to the semaphorin family. In terms of assembly, interacts with host VESPR.

The protein localises to the secreted. In terms of biological role, acts as a semaphorin-like protein and binds to host plexin C1 receptor. May alter the movement of plexin C1-expressing cells including dendritic cells, monocytes, or granulocytes in the proximity of infected cells. May also regulate host cell cytoskeleton of neighboring cells to improve viral infection. The chain is Semaphorin-like protein 139 (EVM139) from Ectromelia virus (strain Moscow) (ECTV).